We begin with the raw amino-acid sequence, 356 residues long: Photosynthetic reaction center cytochrome c subunit (356 aa).

Residues 1 to 20 (MKQLIVNSVATVALASLVAG) form the signal peptide. Residue Cys21 is the site of S-diacylglycerol cysteine attachment. Heme-binding residues include Met94, Cys107, Cys110, His111, Met130, His144, Cys152, Cys155, His156, Met253, Cys264, Cys267, His268, Cys325, Cys328, and His329.

As to quaternary structure, component of the photosynthetic reaction center composed of protein subunits L (PufL), M (PufM), H (PuhA) and cytochrome C (PufC). Binds 4 heme groups per subunit. Post-translationally, after the signal sequence is removed, the N-terminal cysteine is modified to form a diacylglyceride thioether, but the alpha-amino group is free and is not N-palmitoylated.

The protein resides in the cellular chromatophore membrane. The reaction center of purple bacteria contains a tightly bound cytochrome molecule which re-reduces the photo oxidized primary electron donor. The polypeptide is Photosynthetic reaction center cytochrome c subunit (Blastochloris viridis (Rhodopseudomonas viridis)).